The primary structure comprises 503 residues: Aspartyl/glutamyl-tRNA(Asn/Gln) amidotransferase subunit B (503 aa).

The protein belongs to the GatB/GatE family. GatB subfamily. In terms of assembly, heterotrimer of A, B and C subunits.

The catalysed reaction is L-glutamyl-tRNA(Gln) + L-glutamine + ATP + H2O = L-glutaminyl-tRNA(Gln) + L-glutamate + ADP + phosphate + H(+). It catalyses the reaction L-aspartyl-tRNA(Asn) + L-glutamine + ATP + H2O = L-asparaginyl-tRNA(Asn) + L-glutamate + ADP + phosphate + 2 H(+). Allows the formation of correctly charged Asn-tRNA(Asn) or Gln-tRNA(Gln) through the transamidation of misacylated Asp-tRNA(Asn) or Glu-tRNA(Gln) in organisms which lack either or both of asparaginyl-tRNA or glutaminyl-tRNA synthetases. The reaction takes place in the presence of glutamine and ATP through an activated phospho-Asp-tRNA(Asn) or phospho-Glu-tRNA(Gln). This is Aspartyl/glutamyl-tRNA(Asn/Gln) amidotransferase subunit B from Mycobacterium avium (strain 104).